The chain runs to 43 residues: Protein PsbN 2 (43 aa).

Residues 4–24 (ATILGISIAAALVGITVLALY) traverse the membrane as a helical segment.

Belongs to the PsbN family.

It is found in the cellular thylakoid membrane. Its function is as follows. May play a role in photosystem I and II biogenesis. The polypeptide is Protein PsbN 2 (Microcystis aeruginosa (strain NIES-843 / IAM M-2473)).